We begin with the raw amino-acid sequence, 185 residues long: Large ribosomal subunit protein bL12c (185 aa).

The transit peptide at 1 to 47 directs the protein to the chloroplast; sequence MASTALSSAFSLLSLPSSSSPAAAAAAAPRSFAVPSRARPRRAVAVV.

It belongs to the bacterial ribosomal protein bL12 family.

It localises to the plastid. Its subcellular location is the chloroplast. This Oryza sativa subsp. japonica (Rice) protein is Large ribosomal subunit protein bL12c (RPL12-2).